The chain runs to 211 residues: Thiamine-phosphate synthase (211 aa).

4-amino-2-methyl-5-(diphosphooxymethyl)pyrimidine is bound by residues Gln44–Lys48 and Asn75. Mg(2+) contacts are provided by Asp76 and Asp95. Residue Ser114 coordinates 4-amino-2-methyl-5-(diphosphooxymethyl)pyrimidine. Thr140–Ser142 serves as a coordination point for 2-[(2R,5Z)-2-carboxy-4-methylthiazol-5(2H)-ylidene]ethyl phosphate. Residue Lys143 coordinates 4-amino-2-methyl-5-(diphosphooxymethyl)pyrimidine. Residue Gly171 coordinates 2-[(2R,5Z)-2-carboxy-4-methylthiazol-5(2H)-ylidene]ethyl phosphate.

The protein belongs to the thiamine-phosphate synthase family. It depends on Mg(2+) as a cofactor.

The catalysed reaction is 2-[(2R,5Z)-2-carboxy-4-methylthiazol-5(2H)-ylidene]ethyl phosphate + 4-amino-2-methyl-5-(diphosphooxymethyl)pyrimidine + 2 H(+) = thiamine phosphate + CO2 + diphosphate. It catalyses the reaction 2-(2-carboxy-4-methylthiazol-5-yl)ethyl phosphate + 4-amino-2-methyl-5-(diphosphooxymethyl)pyrimidine + 2 H(+) = thiamine phosphate + CO2 + diphosphate. The enzyme catalyses 4-methyl-5-(2-phosphooxyethyl)-thiazole + 4-amino-2-methyl-5-(diphosphooxymethyl)pyrimidine + H(+) = thiamine phosphate + diphosphate. The protein operates within cofactor biosynthesis; thiamine diphosphate biosynthesis; thiamine phosphate from 4-amino-2-methyl-5-diphosphomethylpyrimidine and 4-methyl-5-(2-phosphoethyl)-thiazole: step 1/1. In terms of biological role, condenses 4-methyl-5-(beta-hydroxyethyl)thiazole monophosphate (THZ-P) and 2-methyl-4-amino-5-hydroxymethyl pyrimidine pyrophosphate (HMP-PP) to form thiamine monophosphate (TMP). The polypeptide is Thiamine-phosphate synthase (Koribacter versatilis (strain Ellin345)).